The chain runs to 273 residues: Epithelial sodium channel subunit beta (273 aa).

Over 1 to 245 the chain is Extracellular; sequence NCYIFNWGQE…RSISESPTTN (245 aa). Intrachain disulfides connect Cys-92/Cys-179, Cys-117/Cys-175, Cys-121/Cys-171, Cys-130/Cys-157, and Cys-132/Cys-146. The chain crosses the membrane as a helical span at residues 246-273; the sequence is VVWLLSNLGGQFGFWMGGSVLCIIEFGE.

The protein belongs to the amiloride-sensitive sodium channel (TC 1.A.6) family. SCNN1B subfamily. As to quaternary structure, component of the heterotrimeric epithelial sodium channel (ENaC) composed of an alpha/SCNN1A, a beta/SCNN1B and a gamma/SCNN1G subunit.

The protein localises to the apical cell membrane. Its subcellular location is the cytoplasmic vesicle membrane. It catalyses the reaction Na(+)(in) = Na(+)(out). Originally identified and characterized by its inhibition by the diuretic drug amiloride. Its function is as follows. This is one of the three pore-forming subunits of the heterotrimeric epithelial sodium channel (ENaC), a critical regulator of sodium balance and fluid homeostasis. ENaC operates in epithelial tissues, where it mediates the electrodiffusion of sodium ions from extracellular fluid through the apical membrane of cells, with water following osmotically. It plays a key role in maintaining sodium homeostasis through electrogenic sodium reabsorption in the kidneys. Additionally, ENaC is essential for airway surface liquid homeostasis, which is crucial for proper mucus clearance. The polypeptide is Epithelial sodium channel subunit beta (Aquarana catesbeiana (American bullfrog)).